Consider the following 758-residue polypeptide: Polyribonucleotide nucleotidyltransferase (758 aa).

The Mg(2+) site is built by D488 and D494. The KH domain occupies 555-614 (PKLYTMKINPEKIRDVIGKGGAVIRALTEETGTQINIDEDGTITIASTDSAKADEAKRRI). An S1 motif domain is found at 624–692 (GKIYEGPVVK…EKGRVKLSMR (69 aa)). The interval 692–758 (RALLDRPMGD…AGEHSGQMDA (67 aa)) is disordered. A compositionally biased stretch (basic and acidic residues) spans 707–735 (PAERGERGDRGDRGDRPERGERRERREPA). Residues 736–745 (GADQQQQQQQ) show a composition bias toward low complexity.

The protein belongs to the polyribonucleotide nucleotidyltransferase family. The cofactor is Mg(2+).

Its subcellular location is the cytoplasm. The catalysed reaction is RNA(n+1) + phosphate = RNA(n) + a ribonucleoside 5'-diphosphate. In terms of biological role, involved in mRNA degradation. Catalyzes the phosphorolysis of single-stranded polyribonucleotides processively in the 3'- to 5'-direction. This Paracidovorax citrulli (strain AAC00-1) (Acidovorax citrulli) protein is Polyribonucleotide nucleotidyltransferase.